A 196-amino-acid chain; its full sequence is Retinol-binding protein 4 (196 aa).

The N-terminal stretch at 1–21 (MAYTWRALLLLALAFLGSSMA) is a signal peptide. Disulfide bonds link C25–C181, C91–C195, and C141–C150. Residue Q119 participates in substrate binding.

This sequence belongs to the calycin superfamily. Lipocalin family. As to quaternary structure, interacts with TTR. Interaction with TTR prevents its loss by filtration through the kidney glomeruli. Interacts with STRA6.

Its subcellular location is the secreted. Its function is as follows. Retinol-binding protein that mediates retinol transport in blood plasma. Delivers retinol from the liver stores to the peripheral tissues. Transfers the bound all-trans retinol to STRA6, that then facilitates retinol transport across the cell membrane. This chain is Retinol-binding protein 4 (RBP4), found in Gallus gallus (Chicken).